Consider the following 471-residue polypeptide: Cysteine--tRNA ligase (471 aa).

Cysteine 29 serves as a coordination point for Zn(2+). Positions 31–41 match the 'HIGH' region motif; it reads PTVYNYIHIGN. Cysteine 209, histidine 234, and glutamate 238 together coordinate Zn(2+). A 'KMSKS' region motif is present at residues 266–270; sequence KMSKS. Position 269 (lysine 269) interacts with ATP.

It belongs to the class-I aminoacyl-tRNA synthetase family. In terms of assembly, monomer. It depends on Zn(2+) as a cofactor.

It is found in the cytoplasm. It catalyses the reaction tRNA(Cys) + L-cysteine + ATP = L-cysteinyl-tRNA(Cys) + AMP + diphosphate. The protein is Cysteine--tRNA ligase of Listeria innocua serovar 6a (strain ATCC BAA-680 / CLIP 11262).